The primary structure comprises 769 residues: Multiple C2 domain and transmembrane region protein 5 (769 aa).

C2 domains follow at residues 23 to 143, 184 to 305, and 345 to 467; these read SVTG…PQWY, PEGV…SRWF, and YSSD…THSY. Ca(2+)-binding residues include D56, D62, D109, D111, and D116. The next 2 helical transmembrane spans lie at 604–624 and 712–732; these read IILV…LFLI and LFVL…FQVV.

The protein belongs to the MCTP family. It depends on Ca(2+) as a cofactor. Highly expressed in roots meristems and shoot apical meristems (SAMs). Observed in flowers.

It localises to the endoplasmic reticulum membrane. Its function is as follows. May function as a signaling molecule by regulating the trafficking of other regulators. The protein is Multiple C2 domain and transmembrane region protein 5 of Arabidopsis thaliana (Mouse-ear cress).